The following is a 232-amino-acid chain: U2 small nuclear ribonucleoprotein B'' (232 aa).

Residues Gln-10–Ala-89 form the RRM 1 domain. The segment at Thr-100–Asn-157 is disordered. A compositionally biased stretch (basic and acidic residues) spans Arg-108–Gln-122. Polar residues-rich tracts occupy residues Arg-123–Asn-139 and Phe-146–Pro-156. One can recognise an RRM 2 domain in the interval Asn-158 to Lys-232.

It belongs to the RRM U1 A/B'' family. As to quaternary structure, component of the spliceosome where it is associated with snRNP U2.

Its subcellular location is the nucleus. The protein localises to the cajal body. It localises to the nucleoplasm. The protein resides in the cytoplasm. In terms of biological role, involved in nuclear pre-mRNA splicing. This chain is U2 small nuclear ribonucleoprotein B'' (U2B''), found in Arabidopsis thaliana (Mouse-ear cress).